Here is a 418-residue protein sequence, read N- to C-terminus: NADH-quinone oxidoreductase subunit D (418 aa).

Belongs to the complex I 49 kDa subunit family. As to quaternary structure, NDH-1 is composed of 14 different subunits. Subunits NuoB, C, D, E, F, and G constitute the peripheral sector of the complex.

The protein resides in the cell inner membrane. It carries out the reaction a quinone + NADH + 5 H(+)(in) = a quinol + NAD(+) + 4 H(+)(out). Its function is as follows. NDH-1 shuttles electrons from NADH, via FMN and iron-sulfur (Fe-S) centers, to quinones in the respiratory chain. The immediate electron acceptor for the enzyme in this species is believed to be ubiquinone. Couples the redox reaction to proton translocation (for every two electrons transferred, four hydrogen ions are translocated across the cytoplasmic membrane), and thus conserves the redox energy in a proton gradient. In Methylacidiphilum infernorum (isolate V4) (Methylokorus infernorum (strain V4)), this protein is NADH-quinone oxidoreductase subunit D.